Consider the following 82-residue polypeptide: DNA-directed RNA polymerase subunit omega (82 aa).

This sequence belongs to the RNA polymerase subunit omega family. In terms of assembly, in cyanobacteria the RNAP catalytic core is composed of 2 alpha, 1 beta, 1 beta', 1 gamma and 1 omega subunit. When a sigma factor is associated with the core the holoenzyme is formed, which can initiate transcription.

The enzyme catalyses RNA(n) + a ribonucleoside 5'-triphosphate = RNA(n+1) + diphosphate. In terms of biological role, promotes RNA polymerase assembly. Latches the N- and C-terminal regions of the beta' subunit thereby facilitating its interaction with the beta and alpha subunits. In Synechococcus sp. (strain CC9902), this protein is DNA-directed RNA polymerase subunit omega.